We begin with the raw amino-acid sequence, 1172 residues long: MKIEELIIDGFKSYAVRTVISNWDDQFNAITGLNGSGKSNILDAICFVLGITNMSTVRAQNLQDLIYKRGQAGITRASVTIVFNNRDPASSPIGFENHPQVSVTRQIIMGGTSKYLINGHRALQQNVQNLFQSVQLNINNPNFLIMQGRITKVLNMKATEILSMIEEASGTRMFEERKEKAFRTMQRKEAKVEEINTLLREEIEPRLTKLRTEKKTFLEYQHIYNDLERLSHLCTAYDYYKLSLKVEELTVQASQKHSHIAEMESSLQTSKQEVLILKEKIKKIEDERMRQMSVSSDRTLDSQLQTVNENITRISTSIELKNTALEEEHGDLQQIRGKAKELETLLRGKRKRLDEVLSVYEKRKDEHQSISKDFKSQEELISSLTTGLSTTEGHETGYSRKLHEARDTLNDFKAEKETNRLKLEGLNKQISLTKPKKAEATKRCDQLNREIDILQNHVEKLKMSLKNTNSDITGEDVLQQKLKQLAKDRGNLLNELDALKSKLAYMEFTYTDPTPNFDRSKVKGLVAQLLTLNEENYDKQTALEITAGGRLYNLIVETEKIGAQLLQKGNLKRRVTIIPLNKITSFVASAERVGAAKKISNNKAQLALELIGYDDELLPAMQYVFGSTLVCDTPESAKKVTFHPSVKLKSVTLDGDVYDPSGTLTGGSVNKSAGPLLQIQKLNSLQLKLQVVTSEYEKLETQLKDLKTQNANFHRLEQEIQLKQHELTLLIEQRETDSSFRLLSDYQQYKDDVKDLKQRLPELDRLILQSDQAIKKIERDMQEWKHNKGSKMAELEKEFNQYKHKLDEFTPILEKSENDYNGVKLECEQLEGELQNHQQSLVQGESTTSLIKTEIAELELSLVNEEHNRKKLTELIEIESAKFSGLNKEIDSLSTSMKTFESEINNGELTIQKLNHEFDRLEREKSVAITAINHLEKENDWIDGQKQHFGKQGTIFDFHSQNMRQCREQLHNLKPRFASMRKAINPKVMDMIDGVEKKEAKLRSMIKTIHRDKKKIQDTVKSIDRFKRSALEKTWREVNSSFGEIFDELLPGNSAELQPPENKEFTDGLEIHVKIGSIWKDSLAELSGGQRSLVALALIMSLLKYKPAPMYILDEIDAALDLSHTQNIGRLIKTKFKGSQFIIVSLKEGMFTNANRLFHVRFMDGSSVVQAR.

Residue 32-39 (GLNGSGKS) participates in ATP binding. 2 coiled-coil regions span residues 172-204 (RMFE…EEIE) and 258-507 (SHIA…AYME). The 121-residue stretch at 520–640 (SKVKGLVAQL…CDTPESAKKV (121 aa)) folds into the SMC hinge domain. A coiled-coil region spans residues 676–941 (LLQIQKLNSL…INHLEKENDW (266 aa)).

The protein belongs to the SMC family. SMC2 subfamily. Forms a heterodimer with cut3/smc4. Component of the condensin complex, which contains the cut3 and cut14 heterodimer, and three non smc subunits that probably regulate the complex: cnd1, cnd2 and cnd3.

It localises to the nucleus. It is found in the cytoplasm. The protein resides in the chromosome. In terms of biological role, central component of the condensin complex, a complex required for conversion of interphase chromatin into mitotic-like condense chromosomes. The condensin complex probably introduces positive supercoils into relaxed DNA in the presence of type I topoisomerases and converts nicked DNA into positive knotted forms in the presence of type II topoisomerases. The polypeptide is Structural maintenance of chromosomes protein 2 (cut14) (Schizosaccharomyces pombe (strain 972 / ATCC 24843) (Fission yeast)).